A 338-amino-acid chain; its full sequence is Methionine synthase (338 aa).

Zn(2+)-binding residues include His-210, Cys-212, Glu-234, and Cys-294.

It belongs to the archaeal MetE family. It depends on Zn(2+) as a cofactor.

Its pathway is amino-acid biosynthesis; L-methionine biosynthesis via de novo pathway. In terms of biological role, catalyzes the transfer of a methyl group to L-homocysteine resulting in methionine formation. The physiological methyl donor is unknown. This Pyrococcus horikoshii (strain ATCC 700860 / DSM 12428 / JCM 9974 / NBRC 100139 / OT-3) protein is Methionine synthase.